The chain runs to 145 residues: D-aminoacyl-tRNA deacylase (145 aa).

The Gly-cisPro motif, important for rejection of L-amino acids motif lies at 137 to 138 (GP).

It belongs to the DTD family. Homodimer.

Its subcellular location is the cytoplasm. The catalysed reaction is glycyl-tRNA(Ala) + H2O = tRNA(Ala) + glycine + H(+). It catalyses the reaction a D-aminoacyl-tRNA + H2O = a tRNA + a D-alpha-amino acid + H(+). Functionally, an aminoacyl-tRNA editing enzyme that deacylates mischarged D-aminoacyl-tRNAs. Also deacylates mischarged glycyl-tRNA(Ala), protecting cells against glycine mischarging by AlaRS. Acts via tRNA-based rather than protein-based catalysis; rejects L-amino acids rather than detecting D-amino acids in the active site. By recycling D-aminoacyl-tRNA to D-amino acids and free tRNA molecules, this enzyme counteracts the toxicity associated with the formation of D-aminoacyl-tRNA entities in vivo and helps enforce protein L-homochirality. The protein is D-aminoacyl-tRNA deacylase of Pseudoalteromonas translucida (strain TAC 125).